A 351-amino-acid polypeptide reads, in one-letter code: Leukotriene B4 receptor 1 (351 aa).

The Extracellular segment spans residues 1–21 (MAANTTSPAAPSSPGGMSLSL). N4 carries N-linked (GlcNAc...) asparagine glycosylation. Residues 22–44 (LPIVLLSVALAVGLPGNSFVVWS) traverse the membrane as a helical segment. Residues 45–56 (ILKRMQKRTVTA) are Cytoplasmic-facing. The chain crosses the membrane as a helical span at residues 57 to 77 (LLVLNLALADLAVLLTAPFFL). The Extracellular portion of the chain corresponds to 78-93 (HFLARGTWSFREMGCR). The chain crosses the membrane as a helical span at residues 94 to 115 (LCHYVCGISMYASVLLITIMSL). Topologically, residues 116-140 (DRSLAVARPFMSQKVRTKAFARWVL) are cytoplasmic. The helical transmembrane segment at 141-161 (AGIWVVSFLLAIPVLVYRTVK) threads the bilayer. Residues 162–179 (WNNRTLICAPNYPNKEHK) are Extracellular-facing. N-linked (GlcNAc...) asparagine glycosylation is present at N164. A helical membrane pass occupies residues 180–200 (VFHLLFEAITGFLLPFLAVVA). At 201–222 (SYSDIGRRLQARRFRRSRRTGR) the chain is on the cytoplasmic side. Residues 223 to 243 (LVVLIILAFAAFWLPYHLVNL) traverse the membrane as a helical segment. Over 244-268 (VEAGRTVAGWDKNSPAGQRLRLARY) the chain is Extracellular. Residues 269–289 (VLIALAFLSSSVNPVLYACAG) form a helical membrane-spanning segment. At 290-351 (GGLLRSAGVG…TSSTIPESSK (62 aa)) the chain is on the cytoplasmic side. Polar residues-rich tracts occupy residues 311–326 (EVSS…QTPK) and 339–351 (SFMT…ESSK). The interval 311 to 351 (EVSSTRRGGTLVQTPKDTPACPEPGPTDSFMTSSTIPESSK) is disordered.

It belongs to the G-protein coupled receptor 1 family. Post-translationally, phosphorylated by GRK6 upon leukotriene B4 binding; which promotes desensitization. As to expression, highly expressed on activated leukocytes, including eosinophils.

It is found in the cell membrane. Functionally, receptor for leukotriene B4, a potent chemoattractant involved in inflammation and immune response. The chain is Leukotriene B4 receptor 1 (Ltb4r) from Mus musculus (Mouse).